A 645-amino-acid polypeptide reads, in one-letter code: 1-deoxy-D-xylulose-5-phosphate synthase (645 aa).

Residues histidine 87 and 128-130 (GHS) each bind thiamine diphosphate. Aspartate 159 contributes to the Mg(2+) binding site. Residues 160 to 161 (GA), asparagine 188, phenylalanine 295, and glutamate 384 contribute to the thiamine diphosphate site. Asparagine 188 lines the Mg(2+) pocket.

The protein belongs to the transketolase family. DXPS subfamily. In terms of assembly, homodimer. It depends on Mg(2+) as a cofactor. The cofactor is thiamine diphosphate.

The catalysed reaction is D-glyceraldehyde 3-phosphate + pyruvate + H(+) = 1-deoxy-D-xylulose 5-phosphate + CO2. It functions in the pathway metabolic intermediate biosynthesis; 1-deoxy-D-xylulose 5-phosphate biosynthesis; 1-deoxy-D-xylulose 5-phosphate from D-glyceraldehyde 3-phosphate and pyruvate: step 1/1. Its function is as follows. Catalyzes the acyloin condensation reaction between C atoms 2 and 3 of pyruvate and glyceraldehyde 3-phosphate to yield 1-deoxy-D-xylulose-5-phosphate (DXP). This Alcanivorax borkumensis (strain ATCC 700651 / DSM 11573 / NCIMB 13689 / SK2) protein is 1-deoxy-D-xylulose-5-phosphate synthase.